The sequence spans 362 residues: Transcription factor Sox-18 (362 aa).

Over residues 1 to 13 (MHRPEPSYCREEP) the composition is skewed to basic and acidic residues. Residues 1-68 (MHRPEPSYCR…CEEKPGDPRI (68 aa)) form a disordered region. A compositionally biased stretch (pro residues) spans 37–51 (PSSPPAPDSPTPSPQ). Over residues 59 to 68 (CEEKPGDPRI) the composition is skewed to basic and acidic residues. The segment at residues 68 to 136 (IRRPMNAFMV…QHLQDHPNYK (69 aa)) is a DNA-binding region (HMG box). Interaction with DNA regions lie at residues 70–83 (RPMN…KDER) and 94–106 (HNAV…GQSW). Residues 129–159 (LQDHPNYKYRPRRKKQAKKLKRVDPSPLLRN) are disordered. The segment covering 135 to 149 (YKYRPRRKKQAKKLK) has biased composition (basic residues). Residues 149 to 209 (KRVDPSPLLR…VVEPSEPAFF (61 aa)) form an important for transcriptional activation region. The region spanning 235 to 361 (KTLREISLPY…TAMYYTPCIT (127 aa)) is the Sox C-terminal domain. A 9aaTAD motif is present at residues 307-315 (NEFDQYLNM).

The protein localises to the nucleus. In terms of biological role, transcription factor. Binds to the consensus DNA sequence 5'-AACAAT-3'. Also binds 5'-CACAAT-3' and 5'-AATAAT-3' but with a lower affinity. Acts partially redundantly with sox7 during cardiogenesis, acting indirectly through nodal-signaling to induce mesodermal, organizer and endodermal tissues, which then interact to initiate cardiogenesis. Also acts as an antagonist of beta-catenin signaling. The protein is Transcription factor Sox-18 of Xenopus tropicalis (Western clawed frog).